A 486-amino-acid polypeptide reads, in one-letter code: MELLSYEKLMIGDELNKDSVKVRIVLCSNSKEGVGIMADEKSPGHQNFLSRLDAKGHVGEAYVLLEGNGEVTVFVGIGNVEEDILLVKNNARKAGASAYKCVSQFKNMEMSLTSEYMAREVVSGIMLASYKYRFLHKEKDEPSKKIAINSQSHAVKKAVVVGNAQNFARFLGDTPANLMNPTLFVEYATKYLQDKKNVTFEVFDKSFMERKSMNLLLGVSQGSAQEPKLLVARYRGKSGDAVDIALVGKGVCFDSGGISLKPSARMHRMKGDMLGAASVLSVFGLAADMGIKINMNLVIPLVENLPSGTATKPGDVHVGMNGKSVEINNTDAEGRLILADALVYAQEANPTYIVDVATLTGAMMIALGDAFIGYFTADDDLSKIIHQSGIDANDPVWRMPLSQLYLPSMKSNVADLKNAVEGGHGGSATAAIFLSEFVGKEFKWAHFDIAGVMDSNNNKGVYGDGATGCGVPVLIEMIEKLSTIIN.

Residues K249 and D254 each contribute to the Zn(2+) site. K261 is an active-site residue. The Zn(2+) site is built by D272, D331, and E333. R335 is a catalytic residue.

The protein belongs to the peptidase M17 family. In terms of assembly, homohexamer. It depends on Zn(2+) as a cofactor.

It localises to the cytoplasm. The enzyme catalyses Release of an N-terminal amino acid, Xaa-|-Yaa-, in which Xaa is preferably Leu, but may be other amino acids including Pro although not Arg or Lys, and Yaa may be Pro. Amino acid amides and methyl esters are also readily hydrolyzed, but rates on arylamides are exceedingly low.. It carries out the reaction Release of N-terminal proline from a peptide.. In terms of biological role, presumably involved in the processing and regular turnover of intracellular proteins. Catalyzes the removal of unsubstituted N-terminal amino acids from various peptides. The sequence is that of Cytosol aminopeptidase from Encephalitozoon cuniculi (strain GB-M1) (Microsporidian parasite).